The primary structure comprises 251 residues: ATP synthase subunit a 2 (251 aa).

The next 5 membrane-spanning stretches (helical) occupy residues 35–55 (GQVFMASWVVIALLIIASLLA), 94–114 (LPFIGTLFLFIFVSNWSGSLI), 133–153 (INTTVALALLTSLAYFYAGLS), 198–218 (LVVAVLVFLVPLFVPLPLMAL), and 219–239 (GLFTSAIQALVFATLAGAYIH).

It belongs to the ATPase A chain family. As to quaternary structure, F-type ATPases have 2 components, CF(1) - the catalytic core - and CF(0) - the membrane proton channel. CF(1) has five subunits: alpha(3), beta(3), gamma(1), delta(1), epsilon(1). CF(0) has four main subunits: a, b, b' and c.

The protein localises to the cellular thylakoid membrane. Key component of the proton channel; it plays a direct role in the translocation of protons across the membrane. This chain is ATP synthase subunit a 2, found in Crocosphaera subtropica (strain ATCC 51142 / BH68) (Cyanothece sp. (strain ATCC 51142)).